The primary structure comprises 466 residues: Soluble pyridine nucleotide transhydrogenase (466 aa).

E36 to C45 serves as a coordination point for FAD.

The protein belongs to the class-I pyridine nucleotide-disulfide oxidoreductase family. FAD is required as a cofactor.

The protein resides in the cytoplasm. The catalysed reaction is NAD(+) + NADPH = NADH + NADP(+). Conversion of NADPH, generated by peripheral catabolic pathways, to NADH, which can enter the respiratory chain for energy generation. The protein is Soluble pyridine nucleotide transhydrogenase of Klebsiella pneumoniae subsp. pneumoniae (strain ATCC 700721 / MGH 78578).